The chain runs to 390 residues: Succinyl-diaminopimelate desuccinylase 1 (390 aa).

H76 is a binding site for Zn(2+). D78 is an active-site residue. D109 is a Zn(2+) binding site. E143 functions as the Proton acceptor in the catalytic mechanism. Zn(2+) contacts are provided by E144, E172, and H363.

It belongs to the peptidase M20A family. DapE subfamily. Homodimer. Zn(2+) is required as a cofactor. It depends on Co(2+) as a cofactor.

The enzyme catalyses N-succinyl-(2S,6S)-2,6-diaminopimelate + H2O = (2S,6S)-2,6-diaminopimelate + succinate. It functions in the pathway amino-acid biosynthesis; L-lysine biosynthesis via DAP pathway; LL-2,6-diaminopimelate from (S)-tetrahydrodipicolinate (succinylase route): step 3/3. Its function is as follows. Catalyzes the hydrolysis of N-succinyl-L,L-diaminopimelic acid (SDAP), forming succinate and LL-2,6-diaminopimelate (DAP), an intermediate involved in the bacterial biosynthesis of lysine and meso-diaminopimelic acid, an essential component of bacterial cell walls. This chain is Succinyl-diaminopimelate desuccinylase 1, found in Alteromonas mediterranea (strain DSM 17117 / CIP 110805 / LMG 28347 / Deep ecotype).